The primary structure comprises 90 residues: Cell division topological specificity factor (90 aa).

This sequence belongs to the MinE family.

In terms of biological role, prevents the cell division inhibition by proteins MinC and MinD at internal division sites while permitting inhibition at polar sites. This ensures cell division at the proper site by restricting the formation of a division septum at the midpoint of the long axis of the cell. This chain is Cell division topological specificity factor, found in Brucella abortus (strain S19).